The sequence spans 308 residues: Putative mitochondrial transporter UCP3 (308 aa).

Residues 1-10 (MVGLQPSEVP) are Mitochondrial intermembrane-facing. The chain crosses the membrane as a helical span at residues 11-32 (PTTVVKFLGAGTAACFADLLTF). 3 Solcar repeats span residues 11–102 (PTTV…VKQF), 111–202 (SSVA…IKEK), and 211–296 (DNFP…LKRA). Over 33–73 (PLDTAKVRLQIQGENPGVQSVQYRGVLGTILTMVRTEGPRS) the chain is Mitochondrial matrix. A helical membrane pass occupies residues 74–96 (PYSGLVAGLHRQMSFASIRIGLY). Residues 97 to 116 (DSVKQFYTPKGTDHSSVAIR) lie on the Mitochondrial intermembrane side of the membrane. A helical membrane pass occupies residues 117–133 (ILAGCTTGAMAVTCAQP). At 134-179 (TDVVKVRFQAMIRLGTGGERKYRGTMDAYRTIAREEGVRGLWKGTW) the chain is on the mitochondrial matrix side. A helical transmembrane segment spans residues 180-196 (PNITRNAIVNCAEMVTY). Topologically, residues 197-213 (DIIKEKLLDSHLFTDNF) are mitochondrial intermembrane. The helical transmembrane segment at 214–233 (PCHFVSAFGAGFCATVVASP) threads the bilayer. Over 234–267 (VDVVKTRYMNAPPGRYRSPLHCMLRMVAQEGPTA) the chain is Mitochondrial matrix. Residues 268–290 (FYKGFMPSFLRLGSWNVMMFVTY) traverse the membrane as a helical segment. The interval 275 to 297 (SFLRLGSWNVMMFVTYEQLKRAL) is purine nucleotide binding. Residues 291-308 (EQLKRALMKVQVLRESPF) are Mitochondrial intermembrane-facing.

Belongs to the mitochondrial carrier (TC 2.A.29) family. As to quaternary structure, interacts with HAX1; the interaction is direct and calcium-dependent.

The protein resides in the mitochondrion inner membrane. Putative transmembrane transporter that plays a role in mitochondrial metabolism via an as yet unclear mechanism. Originally, this mitochondrial protein was thought to act as a proton transmembrane transporter from the mitochondrial intermembrane space into the matrix, causing proton leaks through the inner mitochondrial membrane, thereby uncoupling mitochondrial membrane potential generation from ATP synthesis. However, this function is controversial and uncoupling may not be the function, or at least not the main function, but rather a consequence of more conventional metabolite transporter activity. The protein is Putative mitochondrial transporter UCP3 of Rattus norvegicus (Rat).